Consider the following 116-residue polypeptide: Large ribosomal subunit protein bL20c (116 aa).

It belongs to the bacterial ribosomal protein bL20 family.

It localises to the plastid. Its subcellular location is the chloroplast. Binds directly to 23S ribosomal RNA and is necessary for the in vitro assembly process of the 50S ribosomal subunit. It is not involved in the protein synthesizing functions of that subunit. The chain is Large ribosomal subunit protein bL20c from Rhodomonas salina (Cryptomonas salina).